Reading from the N-terminus, the 735-residue chain is Receptor-type guanylate cyclase gcy-27 (735 aa).

The N-linked (GlcNAc...) asparagine glycan is linked to Asn11. The chain crosses the membrane as a helical span at residues 28 to 48 (FIICTLPVPIYFVVVAIWTIN). The Protein kinase domain occupies 188-465 (ALTSRRRVFG…IENLRNAIAI (278 aa)). The Guanylate cyclase domain maps to 538–668 (TVMFVQICDF…DTVNFASRMQ (131 aa)).

It belongs to the adenylyl cyclase class-4/guanylyl cyclase family. Expressed bilaterally in ASK, ASI and ASJ sensory neurons.

The protein resides in the cell membrane. The enzyme catalyses GTP = 3',5'-cyclic GMP + diphosphate. Its function is as follows. Guanylate cyclase involved in the production of the second messenger cGMP. May be involved in sensitivity to quinine by regulating egl-4 activity through the production of cGMP. Promotes the calcium flux to the cytoplasm in ASJ sensory neurons upon removal of a nitric oxide (NO) stimulus and is thereby involved in the behavioral avoidance response to NO-producing organisms like P.aeruginosa. This is Receptor-type guanylate cyclase gcy-27 from Caenorhabditis elegans.